The following is a 270-amino-acid chain: Sugar phosphatase YidA (270 aa).

The active-site Nucleophile is aspartate 9. Aspartate 9 is a binding site for Mg(2+). Phosphate is bound at residue methionine 10. Aspartate 11 is a binding site for Mg(2+). Phosphate contacts are provided by residues threonine 43–glycine 44 and lysine 197. Aspartate 220 lines the Mg(2+) pocket. Asparagine 223 is a phosphate binding site.

Belongs to the HAD-like hydrolase superfamily. Cof family. As to quaternary structure, homodimer. Mg(2+) serves as cofactor.

The catalysed reaction is sugar phosphate + H2O = sugar + phosphate.. Its function is as follows. Catalyzes the dephosphorylation of different sugar phosphates. The chain is Sugar phosphatase YidA (yidA) from Escherichia coli O6:H1 (strain CFT073 / ATCC 700928 / UPEC).